A 509-amino-acid chain; its full sequence is Protein OS-9 homolog (509 aa).

The N-terminal stretch at 1-23 (MRRQSRIVASLLVLACASSGAFA) is a signal peptide. The span at 64–74 (SPDLNDISEQT) shows a compositional bias: polar residues. Residues 64–91 (SPDLNDISEQTPLKDESEESIRDGSSGE) form a disordered region. The segment covering 75–91 (PLKDESEESIRDGSSGE) has biased composition (basic and acidic residues). The N-linked (GlcNAc...) asparagine glycan is linked to N120. Positions 151–291 (GKCLYYISGW…LIYTPRLCND (141 aa)) constitute an MRH domain. C153 and C166 are joined by a disulfide. Residues W160, W161, Q173, D246, R252, E273, and Y279 each coordinate a mannooligosaccharide derivative. Disulfide bonds link C245-C277 and C260-C289. The tract at residues 433–509 (GVVDTDEDEE…GSEEIFKDEL (77 aa)) is disordered. Residues 436 to 451 (DTDEDEEDGYENEEGE) show a composition bias toward acidic residues. Residues 452 to 461 (TDKREQRENT) are compositionally biased toward basic and acidic residues. Residues 489–502 (RSEDGEDPDVDGSE) are compositionally biased toward acidic residues. The Prevents secretion from ER signature appears at 506–509 (KDEL).

It belongs to the OS-9 family. As to quaternary structure, interacts with missfolded ER lumenal proteins.

The protein localises to the endoplasmic reticulum membrane. Lectin involved in the quality control of the secretory pathway. As a member of the endoplasmic reticulum-associated degradation lumenal (ERAD-L) surveillance system, targets misfolded endoplasmic reticulum lumenal glycoproteins for degradation. The polypeptide is Protein OS-9 homolog (yos9) (Emericella nidulans (strain FGSC A4 / ATCC 38163 / CBS 112.46 / NRRL 194 / M139) (Aspergillus nidulans)).